Here is a 420-residue protein sequence, read N- to C-terminus: MTEHEAIVQHLQAVQNASRKIVTLDEDAINALLNDLADRIPDAAETILEANRKDLERMDPADPRYDRLLLNESRLNSIASDLRNVAALPSPLDRVLEERTLPNGLELRKVSVPLGVIGIIYESRPNVTFDVFALCLKSGNATVLKGGSDAAFSNIAIVELIQTVIRDRGLDPEMIYLLPAEREAAHILLNAVGYIDVIIPRGSQALIDFARKHSTVPVIETGAGIVHTYFDESGDLAMGRDIIFNAKTRRPSVCNALDTLIVHKSRIDDLPVLVEQLEEKLVQIFADEPAYYKLLNRYPDELLQIATPENFGTEYLSLKMSIKTVETFEEALDHIAHHSSKHSEAIVASDQATIDAFMKRVDAAAVYANTSTAFTDGAQFGLGAEIGISTQKLHARGPMALKELCTYKWLIEGQGQVRPA.

It belongs to the gamma-glutamyl phosphate reductase family.

It localises to the cytoplasm. It catalyses the reaction L-glutamate 5-semialdehyde + phosphate + NADP(+) = L-glutamyl 5-phosphate + NADPH + H(+). Its pathway is amino-acid biosynthesis; L-proline biosynthesis; L-glutamate 5-semialdehyde from L-glutamate: step 2/2. Catalyzes the NADPH-dependent reduction of L-glutamate 5-phosphate into L-glutamate 5-semialdehyde and phosphate. The product spontaneously undergoes cyclization to form 1-pyrroline-5-carboxylate. This Chlorobaculum parvum (strain DSM 263 / NCIMB 8327) (Chlorobium vibrioforme subsp. thiosulfatophilum) protein is Gamma-glutamyl phosphate reductase.